A 294-amino-acid polypeptide reads, in one-letter code: Cell division protein ZipA (294 aa).

A topological domain (periplasmic) is located at residue Met1. The chain crosses the membrane as a helical span at residues 2–22 (EIGLREWLILIGIIVIAGILF). The Cytoplasmic portion of the chain corresponds to 23-294 (DGWRRMRGGK…FERRALTQKR (272 aa)). Disordered stretches follow at residues 64–111 (THKE…GDLN) and 126–146 (KDDFVADNNRHGAAATPSTPV). Residues 82–91 (ARERERDPKP) show a composition bias toward basic and acidic residues.

Belongs to the ZipA family. In terms of assembly, interacts with FtsZ via their C-terminal domains.

The protein localises to the cell inner membrane. Functionally, essential cell division protein that stabilizes the FtsZ protofilaments by cross-linking them and that serves as a cytoplasmic membrane anchor for the Z ring. Also required for the recruitment to the septal ring of downstream cell division proteins. This Pseudomonas entomophila (strain L48) protein is Cell division protein ZipA.